Consider the following 112-residue polypeptide: MPYQAESMTSQPQMTVTSYTVSHWSSDVCDCCDDCGIRLCGAFIPCILGCKVAQDNGDSCCLPFLPGAMVALRTSIRDRYHINGSVCDDWVIMTCCSFCGLCQLAREQKARG.

This sequence belongs to the cornifelin family.

This chain is Cornifelin homolog (cnfn), found in Danio rerio (Zebrafish).